Here is a 250-residue protein sequence, read N- to C-terminus: MEKLEKLYEGKAKQLYATDDPEVLWVEYKNTATAGDGEKKEDFTGKGRLNNLITTIIFDLLKKRGIDSHLIKRVDDTGQLVRKVNMFPLEIVLRNVAAGHFCSRLGVEEGLPLKEPVLEYFLKNDDLHDPFVNDDDLVALGVCTREDLAEIAPLARKINEALIEIFAKIDVKLVDFKIEMGRATDGTLLLADEITPDSCRLWDQKDHSGKVEHLDKDLFRRGLGSIIPAYEEIEERLAELAKSEGIEVAE.

The protein belongs to the SAICAR synthetase family.

The enzyme catalyses 5-amino-1-(5-phospho-D-ribosyl)imidazole-4-carboxylate + L-aspartate + ATP = (2S)-2-[5-amino-1-(5-phospho-beta-D-ribosyl)imidazole-4-carboxamido]succinate + ADP + phosphate + 2 H(+). It functions in the pathway purine metabolism; IMP biosynthesis via de novo pathway; 5-amino-1-(5-phospho-D-ribosyl)imidazole-4-carboxamide from 5-amino-1-(5-phospho-D-ribosyl)imidazole-4-carboxylate: step 1/2. The chain is Phosphoribosylaminoimidazole-succinocarboxamide synthase from Bifidobacterium longum (strain DJO10A).